A 210-amino-acid chain; its full sequence is Uridine kinase (210 aa).

12 to 19 provides a ligand contact to ATP; that stretch reads GGSGGGKT.

Belongs to the uridine kinase family.

The protein localises to the cytoplasm. The enzyme catalyses uridine + ATP = UMP + ADP + H(+). The catalysed reaction is cytidine + ATP = CMP + ADP + H(+). Its pathway is pyrimidine metabolism; CTP biosynthesis via salvage pathway; CTP from cytidine: step 1/3. The protein operates within pyrimidine metabolism; UMP biosynthesis via salvage pathway; UMP from uridine: step 1/1. The sequence is that of Uridine kinase from Streptococcus gordonii (strain Challis / ATCC 35105 / BCRC 15272 / CH1 / DL1 / V288).